A 537-amino-acid polypeptide reads, in one-letter code: O-phosphoserine--tRNA(Cys) ligase (537 aa).

Residues 186–188 (HMT), 231–233 (SAS), 273–274 (YY), and N317 each bind substrate.

This sequence belongs to the class-II aminoacyl-tRNA synthetase family. O-phosphoseryl-tRNA(Cys) synthetase subfamily. Homotetramer. Interacts with SepCysS.

It catalyses the reaction tRNA(Cys) + O-phospho-L-serine + ATP = O-phospho-L-seryl-tRNA(Cys) + AMP + diphosphate. Its function is as follows. Catalyzes the attachment of O-phosphoserine (Sep) to tRNA(Cys). This chain is O-phosphoserine--tRNA(Cys) ligase, found in Methanococcus maripaludis (strain C7 / ATCC BAA-1331).